A 257-amino-acid polypeptide reads, in one-letter code: tRNA pseudouridine synthase A (257 aa).

The active-site Nucleophile is the Asp-53. Residue Tyr-111 coordinates substrate.

It belongs to the tRNA pseudouridine synthase TruA family. As to quaternary structure, homodimer.

The catalysed reaction is uridine(38/39/40) in tRNA = pseudouridine(38/39/40) in tRNA. In terms of biological role, formation of pseudouridine at positions 38, 39 and 40 in the anticodon stem and loop of transfer RNAs. The polypeptide is tRNA pseudouridine synthase A (Xylella fastidiosa (strain M23)).